A 301-amino-acid chain; its full sequence is UDP-N-acetylenolpyruvoylglucosamine reductase (301 aa).

The FAD-binding PCMH-type domain maps to 26–193 (KTGGPAQYLA…VSATFGLEPG (168 aa)). R172 is an active-site residue. The active-site Proton donor is the S222. The active site involves E292.

It belongs to the MurB family. Requires FAD as cofactor.

The protein resides in the cytoplasm. It carries out the reaction UDP-N-acetyl-alpha-D-muramate + NADP(+) = UDP-N-acetyl-3-O-(1-carboxyvinyl)-alpha-D-glucosamine + NADPH + H(+). Its pathway is cell wall biogenesis; peptidoglycan biosynthesis. Its function is as follows. Cell wall formation. The chain is UDP-N-acetylenolpyruvoylglucosamine reductase from Lactobacillus johnsonii (strain CNCM I-12250 / La1 / NCC 533).